We begin with the raw amino-acid sequence, 157 residues long: Ribosomal RNA large subunit methyltransferase H (157 aa).

S-adenosyl-L-methionine is bound by residues leucine 73, glycine 104, and 121-126; that span reads LSPLTL.

This sequence belongs to the RNA methyltransferase RlmH family. As to quaternary structure, homodimer.

Its subcellular location is the cytoplasm. The catalysed reaction is pseudouridine(1915) in 23S rRNA + S-adenosyl-L-methionine = N(3)-methylpseudouridine(1915) in 23S rRNA + S-adenosyl-L-homocysteine + H(+). Specifically methylates the pseudouridine at position 1915 (m3Psi1915) in 23S rRNA. This chain is Ribosomal RNA large subunit methyltransferase H, found in Acidithiobacillus ferrooxidans (strain ATCC 23270 / DSM 14882 / CIP 104768 / NCIMB 8455) (Ferrobacillus ferrooxidans (strain ATCC 23270)).